A 229-amino-acid polypeptide reads, in one-letter code: Ras-related protein rab-39 (229 aa).

GTP is bound at residue 73–77 (DTAGQ). S-geranylgeranyl cysteine attachment occurs at residues Cys227 and Cys229. Cys229 is subject to Cysteine methyl ester.

This sequence belongs to the small GTPase superfamily. Rab family. Interacts (in GTP-bound form) with Ras association domain-containing protein rsf-1.

The protein localises to the cell membrane. The protein resides in the cytoplasmic vesicle membrane. It is found in the golgi apparatus. Small GTPases Rab involved in autophagy. The small GTPases Rab are key regulators of intracellular membrane trafficking, from the formation of transport vesicles to their fusion with membranes. Rabs cycle between an inactive GDP-bound form and an active GTP-bound form that is able to recruit to membranes different sets of downstream effectors directly responsible for vesicle formation, movement, tethering and fusion. Involved in positively regulating the oxidative stress response, perhaps in concert with the Ras association domain-containing protein rsf-1. The chain is Ras-related protein rab-39 from Caenorhabditis elegans.